The sequence spans 861 residues: MIGQITSGLFGGHDDSKKVKGTVVMMNKNVLDFTDLASSLTGKIFDVLGQKVSFQLISSVQGDPTNGLQGKHSNPAYLENSLFTLTPLTAGSETAFGVTFDWNEEFGVPGAFIIKNMHITEFFLKSLTLEDVPNHGKVHFVCNSWVYPSLNYKSDRIFFANQPYLPSDTPELLRKYRENELLTLRGDGTGKREAWDRIYDYDIYNDLGNPDQGKENVRTTLGGSAEYPYPRRGRTGRPPTRTDPKSESRIPLILSTDIYVPRDERFGHLKMSDFLTYALKSIVQFILPELHALFDGTPNEFDSFEDVLRLYEGGIKLPQGPLFKALTAAIPLEMIRELLRTDGEGILRFPTPLVIKDSKTAWRTDEEFAREMLAGTNPVIISRLQEFPPKSKLDPEAYGNQNSTITAEHIEDKLDGLTVDEAMNNNKLFILNHHDLLIPYLRRINTTITKTYASRTLLFLQDNGSLKPLAIELSLPHPDGDQFGVTSKVYTPSDQGVESSIWQLAKAYVAVNDSGVHQLISHWLNTHAVIEPFVIATNRQLSVLHPIHKLLYPHFRDTMNINALARQILINAAGVFESTVFQSKFALEMSAVVYKDWVFPDQALPADLVKRGVAVEDSSSPHGVRLLIEDYPYAVDGLEIWSAIKSWVTDYCSFYYGSDEEILKDNELQAWWKELREVGHGDKKNEPWWPEMETPQELIDSCTTIIWIASALHAAVNFGQYPYAGYLPNRATVSRRFMPEPGTPEYEELKKNPDKAFLKTITAQLQTLLGVSLVEILSRHTTDEIYLGQRESPEWTKDKEPLAAFDRFGKKLTDIEKQIIQRNGDNILTNRSGPVNAPYTLLFPTSEGGLTGKGIPNSVSI.

Residues 33 to 160 (FTDLASSLTG…NYKSDRIFFA (128 aa)) form the PLAT domain. The region spanning 163-861 (PYLPSDTPEL…GKGIPNSVSI (699 aa)) is the Lipoxygenase domain. The segment at 220-247 (TLGGSAEYPYPRRGRTGRPPTRTDPKSE) is disordered. Positions 522, 527, 713, 717, and 861 each coordinate Fe cation.

The protein belongs to the lipoxygenase family. In terms of assembly, monomer. It depends on Fe cation as a cofactor. Expressed in tubers and roots. Not detected in leaves, flowers, stems, shoot tips, or axillary buds.

The protein localises to the cytoplasm. The enzyme catalyses (9Z,12Z)-octadecadienoate + O2 = (9S)-hydroperoxy-(10E,12Z)-octadecadienoate. The protein operates within lipid metabolism; oxylipin biosynthesis. Its function is as follows. Plant lipoxygenases may be involved in a number of diverse aspects of plant physiology including growth and development, pest resistance, and senescence or responses to wounding. Catalyzes the hydroperoxidation of lipids containing a cis,cis-1,4-pentadiene structure. This Solanum tuberosum (Potato) protein is Probable linoleate 9S-lipoxygenase 3 (LOX1.3).